Here is a 115-residue protein sequence, read N- to C-terminus: Beta-2-microglobulin (115 aa).

Residues Met1–Ala16 form the signal peptide. One can recognise an Ig-like C1-type domain in the interval Pro22 to Asp113.

Belongs to the beta-2-microglobulin family. As to quaternary structure, heterodimer of an alpha chain and a beta chain. Beta-2-microglobulin is the beta-chain of major histocompatibility complex class I molecules.

The protein localises to the secreted. In terms of biological role, component of the class I major histocompatibility complex (MHC). Involved in the presentation of peptide antigens to the immune system. This Xenopus laevis (African clawed frog) protein is Beta-2-microglobulin (b2m).